Consider the following 84-residue polypeptide: MRTVVFFILVSIFLVALKPTGTQAQIVDCWETWSRCTKWSQGGTGTLWKSCNDRCKELGRKRGQCEEKPSRCPLSKKAWTCICY.

Residues 1–24 (MRTVVFFILVSIFLVALKPTGTQA) form the signal peptide. Gln25 is modified (pyrrolidone carboxylic acid). 4 cysteine pairs are disulfide-bonded: Cys29–Cys72, Cys36–Cys65, Cys51–Cys81, and Cys55–Cys83.

Expressed in the endodermal epithelium.

The protein resides in the secreted. It is found in the target cell membrane. Its function is as follows. Cationic antimicrobial peptide potently active against Gram-positive and Gram-negative bacteria including multi-resistant human pathogenic strains. Is not active against the Gram-positive Coccus species, Gram-negative non-fermentation species and against the fungus C.albicans. It leads to aggregation of bacteria as an initial step of its bactericidal mechanism. Aggregated cells are connected via electron-dense contacts and adopt a thorn apple-like morphology. Hydramycin contains a belt of positively charged residues that separate two hydrophobic areas. This structure may explain the observed aggregation of bacteria, since each of these areas can immerse into the outer leaflets of the membranes of two individual bacteria. Is able to permeabilize membranes of viable bacteria at low and neutral pH values, but no pore-forming activity is not detected. The sequence is that of Hydramacin-1 from Hydra vulgaris (Hydra).